A 242-amino-acid polypeptide reads, in one-letter code: Fibrinolytic enzyme, isozyme C (242 aa).

Positions 1-242 (VIGGTNASPG…YLGWIGDNSR (242 aa)) constitute a Peptidase S1 domain. A disulfide bond links cysteine 29 and cysteine 45. Residues histidine 44 and aspartate 93 each act as charge relay system in the active site. 3 disulfides stabilise this stretch: cysteine 127-cysteine 197, cysteine 158-cysteine 176, and cysteine 187-cysteine 219. Catalysis depends on serine 191, which acts as the Charge relay system.

The protein belongs to the peptidase S1 family.

The sequence is that of Fibrinolytic enzyme, isozyme C from Lumbricus rubellus (Humus earthworm).